The primary structure comprises 105 residues: Integration host factor subunit beta (105 aa).

The protein belongs to the bacterial histone-like protein family. Heterodimer of an alpha and a beta chain.

Functionally, this protein is one of the two subunits of integration host factor, a specific DNA-binding protein that functions in genetic recombination as well as in transcriptional and translational control. The polypeptide is Integration host factor subunit beta (Nitrosomonas eutropha (strain DSM 101675 / C91 / Nm57)).